Reading from the N-terminus, the 298-residue chain is ADP/ATP translocase 1 (298 aa).

At 1 to 7 (MSDQALS) the chain is on the mitochondrial intermembrane side. Residue S2 is modified to N-acetylserine. One copy of the Solcar 1 repeat lies at 6 to 98 (LSFLKDFLAG…FAFKDKYKQI (93 aa)). Phosphoserine is present on S7. Residues 8–37 (FLKDFLAGGVAAAISKTAVAPIERVKLLLQ) form a helical membrane-spanning segment. Residues 38–74 (VQHASKQISAEKQYKGIIDCVVRIPKEQGFLSFWRGN) lie on the Mitochondrial matrix side of the membrane. At K52 the chain carries N6,N6,N6-trimethyllysine. K52 bears the N6-methyllysine mark. The helical transmembrane segment at 75 to 99 (LANVIRYFPTQALNFAFKDKYKQIF) threads the bilayer. Positions 80 and 92 each coordinate ADP. Topologically, residues 100–109 (LGGVDRHKQF) are mitochondrial intermembrane. The helical transmembrane segment at 110–130 (WRYFAGNLASGGAAGATSLCF) threads the bilayer. 2 Solcar repeats span residues 111–201 (RYFA…AKGM) and 212–297 (VSWM…IKKF). Residues 131–178 (VYPLDFARTRLAADVGKGAAQREFTGLGNCITKIFKSDGLRGLYQGFN) lie on the Mitochondrial matrix side of the membrane. An N6-succinyllysine modification is found at K147. S-nitrosocysteine is present on C160. A helical transmembrane segment spans residues 179–199 (VSVQGIIIYRAAYFGVYDTAK). Residues 200 to 210 (GMLPDPKNVHI) lie on the Mitochondrial intermembrane side of the membrane. Residues 211 to 231 (IVSWMIAQTVTAVAGLVSYPF) traverse the membrane as a helical segment. Residues 232-273 (DTVRRRMMMQSGRKGADIMYTGTVDCWRKIAKDEGPKAFFKG) are Mitochondrial matrix-facing. R235 provides a ligand contact to ADP. Residues 235–240 (RRRMMM) are important for transport activity. Residues 235–240 (RRRMMM) carry the Nucleotide carrier signature motif motif. N6-succinyllysine is present on residues K245 and K272. The chain crosses the membrane as a helical span at residues 274-291 (AWSNVLRGMGGAFVLVLY). The Mitochondrial intermembrane portion of the chain corresponds to 292 to 298 (DEIKKFV).

The protein belongs to the mitochondrial carrier (TC 2.A.29) family. Monomer. Found in a complex with ARL2, ARL2BP and SLC25A4/ANT1. Interacts with ARL2BP. Interacts with TIMM44; leading to inhibit the presequence translocase TIMM23, thereby promoting stabilization of PINK1. In terms of processing, under cell death induction, transglutaminated by TGM2. Transglutamination leads to formation of covalent cross-links between a glutamine and the epsilon-amino group of a lysine residue, forming polymers. In terms of tissue distribution, detected in heart muscle (at protein level). Detected in heart.

The protein resides in the mitochondrion inner membrane. Its subcellular location is the membrane. The catalysed reaction is ADP(in) + ATP(out) = ADP(out) + ATP(in). It carries out the reaction H(+)(in) = H(+)(out). The matrix-open state (m-state) is inhibited by the membrane-permeable bongkrekic acid (BKA). The cytoplasmic-open state (c-state) is inhibited by the membrane-impermeable toxic inhibitor carboxyatractyloside (CATR). Proton transporter activity is inhibited by ADP:ATP antiporter activity. ADP:ATP antiporter that mediates import of ADP into the mitochondrial matrix for ATP synthesis, and export of ATP out to fuel the cell. Cycles between the cytoplasmic-open state (c-state) and the matrix-open state (m-state): operates by the alternating access mechanism with a single substrate-binding site intermittently exposed to either the cytosolic (c-state) or matrix (m-state) side of the inner mitochondrial membrane. In addition to its ADP:ATP antiporter activity, also involved in mitochondrial uncoupling and mitochondrial permeability transition pore (mPTP) activity. Plays a role in mitochondrial uncoupling by acting as a proton transporter: proton transport uncouples the proton flows via the electron transport chain and ATP synthase to reduce the efficiency of ATP production and cause mitochondrial thermogenesis. Proton transporter activity is inhibited by ADP:ATP antiporter activity, suggesting that SLC25A4/ANT1 acts as a master regulator of mitochondrial energy output by maintaining a delicate balance between ATP production (ADP:ATP antiporter activity) and thermogenesis (proton transporter activity). Proton transporter activity requires free fatty acids as cofactor, but does not transport it. Probably mediates mitochondrial uncoupling in tissues that do not express UCP1. Also plays a key role in mPTP opening, a non-specific pore that enables free passage of the mitochondrial membranes to solutes of up to 1.5 kDa, and which contributes to cell death. It is however unclear if SLC25A4/ANT1 constitutes a pore-forming component of mPTP or regulates it. Acts as a regulator of mitophagy independently of ADP:ATP antiporter activity: promotes mitophagy via interaction with TIMM44, leading to inhibit the presequence translocase TIMM23, thereby promoting stabilization of PINK1. The polypeptide is ADP/ATP translocase 1 (Bos taurus (Bovine)).